The following is a 378-amino-acid chain: MANGNSFGVLFCVTTYGESHGGAVGVVVDGCPPRLPLSEADIQAELDRRRPGQSHITTPRQEADRCQILSGVFQGFTLGTPIHILVRNQDARPQDYSEMATTFRPSHADATYQAKYGIRNWQGGGRASARETIGRVAAGAIAKKILRLAAGVEILAYVQRVQDVEAQVDPSSVTAEQVEANIVRCPDPAAAAAMIEKIEAAAREGDSLGGVVECVARNVPRGLGCPVFDKLEADLAKAVMSLPASKGFEIGSGFAGTYLTGKQHNDEFYMTPSGWRTRSNRSGGIQGGISNGEDIVLRVAFKPTATIRQPQSTVTLDGQETVLAARGRHDPCVLPRAVPMVEAMVALVLCDHLLRHHAQCRSLALPEVPIPAVPLPHS.

Arg49 is an NADP(+) binding site. FMN contacts are provided by residues 126 to 128 (RAS), Gly287, 302 to 306 (KPTAT), and Arg328.

It belongs to the chorismate synthase family. As to quaternary structure, homotetramer. FMNH2 serves as cofactor.

The enzyme catalyses 5-O-(1-carboxyvinyl)-3-phosphoshikimate = chorismate + phosphate. Its pathway is metabolic intermediate biosynthesis; chorismate biosynthesis; chorismate from D-erythrose 4-phosphate and phosphoenolpyruvate: step 7/7. Functionally, catalyzes the anti-1,4-elimination of the C-3 phosphate and the C-6 proR hydrogen from 5-enolpyruvylshikimate-3-phosphate (EPSP) to yield chorismate, which is the branch point compound that serves as the starting substrate for the three terminal pathways of aromatic amino acid biosynthesis. This reaction introduces a second double bond into the aromatic ring system. The protein is Chorismate synthase of Synechococcus sp. (strain JA-3-3Ab) (Cyanobacteria bacterium Yellowstone A-Prime).